Here is a 196-residue protein sequence, read N- to C-terminus: MHAPIDSNALATLFSEARTHSAWLDKAVPDALLEQLYEHVRLGPTAVNSCPARFVFVRSAEGKQKLAPCLSKGNLDKTLAAPVTVVVAYDEDFPETLPELFPHADARSWYAGQPALITENALRNSSLQAGYLILAARALGLDCGPMSGFDGKALDAAFFAGTSWKSNLLINLGYGDASKLRDRLPRLPFDRACVLA.

Belongs to the nitroreductase family. HadB/RutE subfamily. FMN is required as a cofactor.

The chain is Putative NADH dehydrogenase/NAD(P)H nitroreductase PST_3601 from Stutzerimonas stutzeri (strain A1501) (Pseudomonas stutzeri).